Reading from the N-terminus, the 466-residue chain is Ribulose bisphosphate carboxylase large chain (466 aa).

K5 carries the post-translational modification N6,N6,N6-trimethyllysine. 2 residues coordinate substrate: N114 and T164. The active-site Proton acceptor is the K166. K168 contributes to the substrate binding site. Mg(2+) is bound by residues K192, D194, and E195. K192 is subject to N6-carboxylysine. The Proton acceptor role is filled by H285. Residues R286, H318, and S370 each coordinate substrate.

This sequence belongs to the RuBisCO large chain family. Type I subfamily. Heterohexadecamer of 8 large chains and 8 small chains; disulfide-linked. The disulfide link is formed within the large subunit homodimers. Mg(2+) is required as a cofactor. Post-translationally, the disulfide bond which can form in the large chain dimeric partners within the hexadecamer appears to be associated with oxidative stress and protein turnover.

The protein resides in the plastid. The protein localises to the chloroplast. It catalyses the reaction 2 (2R)-3-phosphoglycerate + 2 H(+) = D-ribulose 1,5-bisphosphate + CO2 + H2O. The catalysed reaction is D-ribulose 1,5-bisphosphate + O2 = 2-phosphoglycolate + (2R)-3-phosphoglycerate + 2 H(+). Its function is as follows. RuBisCO catalyzes two reactions: the carboxylation of D-ribulose 1,5-bisphosphate, the primary event in carbon dioxide fixation, as well as the oxidative fragmentation of the pentose substrate in the photorespiration process. Both reactions occur simultaneously and in competition at the same active site. In Vitis aestivalis (Grape), this protein is Ribulose bisphosphate carboxylase large chain.